The chain runs to 863 residues: uncharacterized protein (863 aa).

The first 29 residues, 1-29 (MHQSGSVSLCRSAISVLVATALYSPIALA), serve as a signal peptide directing secretion. Positions 595–863 (GVSYDTAMWS…NTQAGVVWTF (269 aa)) constitute an Autotransporter domain.

The protein resides in the cell outer membrane. This is an uncharacterized protein from Escherichia coli (strain K12).